Reading from the N-terminus, the 364-residue chain is Homeobox protein Nkx-6.1 (364 aa).

A disordered region spans residues 35–134; that stretch reads LYPATYPPLP…SSSSSASATS (100 aa). 2 stretches are compositionally biased toward low complexity: residues 48-92 and 109-134; these read PSSS…LSAA and ASGA…SATS. Positions 101–268 are repressor domain; sequence LSRPSMPVAS…KYLAGPERAR (168 aa). Position 189 is an asymmetric dimethylarginine (R189). A DNA-binding region (homeobox) is located at residues 236-295; the sequence is RKHTRPTFSGQQIFALEKTFEQTKYLAGPERARLAYSLGMTESQVKVWFQNRRTKWRKKH. Positions 294-364 are disordered; that stretch reads KHAAEMATAK…LHASEAEGSS (71 aa). Positions 304–317 are enriched in basic and acidic residues; the sequence is KKQDSETERLKGTS. The tract at residues 306–364 is involved in DNA-binding; sequence QDSETERLKGTSENEEEDDDYNKPLDPNSDDEKITQLLKKHKSSSGGLLLHASEAEGSS.

In terms of tissue distribution, pancreatic beta cells.

Its subcellular location is the nucleus. Functionally, together with NKX2-2 and IRX3 acts to restrict the generation of motor neurons to the appropriate region of the neural tube. Belongs to the class II proteins of neuronal progenitor factors, which are induced by SHH signals. Transcription factor which binds to specific A/T-rich DNA sequences in the promoter regions of a number of genes. Involved in transcriptional regulation in islet beta cells. Binds to the insulin promoter and is involved in regulation of the insulin gene. This is Homeobox protein Nkx-6.1 (NKX6-1) from Mesocricetus auratus (Golden hamster).